The chain runs to 402 residues: Tol-Pal system protein TolB (402 aa).

An N-terminal signal peptide occupies residues 1–17 (MKKIVAIFLVFLGSLWA).

The protein belongs to the TolB family. As to quaternary structure, the Tol-Pal system is composed of five core proteins: the inner membrane proteins TolA, TolQ and TolR, the periplasmic protein TolB and the outer membrane protein Pal. They form a network linking the inner and outer membranes and the peptidoglycan layer.

It is found in the periplasm. Part of the Tol-Pal system, which plays a role in outer membrane invagination during cell division and is important for maintaining outer membrane integrity. This Campylobacter jejuni subsp. jejuni serotype O:2 (strain ATCC 700819 / NCTC 11168) protein is Tol-Pal system protein TolB.